A 95-amino-acid chain; its full sequence is Nucleoid-associated protein MARTH_orf159 (95 aa).

This sequence belongs to the YbaB/EbfC family. In terms of assembly, homodimer.

It is found in the cytoplasm. Its subcellular location is the nucleoid. Functionally, binds to DNA and alters its conformation. May be involved in regulation of gene expression, nucleoid organization and DNA protection. In Metamycoplasma arthritidis (strain 158L3-1) (Mycoplasma arthritidis), this protein is Nucleoid-associated protein MARTH_orf159.